The sequence spans 349 residues: Phenylalanine--tRNA ligase alpha subunit (349 aa).

Glutamate 258 is a binding site for Mg(2+).

This sequence belongs to the class-II aminoacyl-tRNA synthetase family. Phe-tRNA synthetase alpha subunit type 1 subfamily. As to quaternary structure, tetramer of two alpha and two beta subunits. Requires Mg(2+) as cofactor.

The protein resides in the cytoplasm. It carries out the reaction tRNA(Phe) + L-phenylalanine + ATP = L-phenylalanyl-tRNA(Phe) + AMP + diphosphate + H(+). The polypeptide is Phenylalanine--tRNA ligase alpha subunit (Rickettsia bellii (strain RML369-C)).